The following is a 130-amino-acid chain: Small ribosomal subunit protein uS9 (130 aa).

Residues 107 to 130 (DARMKERKKPGLKKARKASQFSKR) are disordered. The segment covering 111–130 (KERKKPGLKKARKASQFSKR) has biased composition (basic residues).

The protein belongs to the universal ribosomal protein uS9 family.

In Ligilactobacillus salivarius (strain UCC118) (Lactobacillus salivarius), this protein is Small ribosomal subunit protein uS9.